The primary structure comprises 191 residues: MAP6 domain-containing protein 1 (191 aa).

Residues Cys-5, Cys-10, and Cys-11 are each lipidated (S-palmitoyl cysteine). The interval 31 to 106 (HGYSDPGSEE…RGQSSAPPTR (76 aa)) is disordered. 2 positions are modified to phosphoserine: Ser-38 and Ser-41. Mn regions lie at residues 123–136 (TTSYRQEFQAWTGV) and 158–170 (DPSPGASFQVPEV). A Phosphoserine modification is found at Ser-160.

It belongs to the STOP family. In terms of assembly, interacts with calmodulin. In terms of processing, palmitoylated. Palmitoylation enhances association with microtubules. As to expression, expressed in brain. Found in neurons in primary cultures, but absent in glial cells.

It is found in the golgi apparatus. It localises to the cytoplasm. The protein localises to the cytoskeleton. Functionally, may have microtubule-stabilizing activity. The polypeptide is MAP6 domain-containing protein 1 (Map6d1) (Mus musculus (Mouse)).